Here is a 551-residue protein sequence, read N- to C-terminus: TRAF3-interacting JNK-activating modulator (551 aa).

At 1–526 the chain is on the cytoplasmic side; that stretch reads MISPDPRPSP…QLPPRRQCGR (526 aa). 2 disordered regions span residues 73–95 and 140–178; these read LEEK…RPGQ and DHLS…IKND. Coiled-coil stretches lie at residues 240 to 436 and 464 to 506; these read DKLK…LLTK and WDLR…RKLQ. Residues 527–544 form a helical; Anchor for type IV membrane protein membrane-spanning segment; that stretch reads WLPVLMVVIAAALAVFLA. Residues 545–551 are Extracellular-facing; that stretch reads NKDNLMI.

Interacts (via its coiled-coil domain) with TRAF3 (via isoleucine zipper). Interacts with MAP2K1. Interacts with PPP2CA; this interaction targets PPP2CA to the lysosomes. Interacts with TLR4. Interacts with MAVS. Interacts with TBK1.

Its subcellular location is the cell membrane. The protein resides in the golgi apparatus membrane. The protein localises to the lysosome membrane. It localises to the mitochondrion outer membrane. Its function is as follows. Adapter protein that plays essential roles in both innate and adaptive immunity. Plays a crucial role in the regulation of thymocyte development. Mechanistically, mediates TCR-stimulated activation through recruiting MAP2K1/MEK1 to the Golgi and, thereby, facilitating the interaction of MAP2K1/MEK1 with its activator BRAF. Also plays an essential role in regulatory T-cell stability and function by recruiting the serine-threonine phosphatase catalytic subunit (PPP2CA) to the lysosome, thereby facilitating the interaction of PP2Ac with the mTORC1 component RPTOR and restricting glycolytic metabolism. Positively regulates TLR4 signaling activity in macrophage-mediated inflammation by acting as a molecular clamp to facilitate LPS-induced translocation of TLR4 to lipid rafts. In response to viral infection, facilitates the recruitment of TRAF3 to MAVS within mitochondria leading to IRF3 activation and interferon production. However, participates in the maintenance of immune homeostasis and the prevention of overzealous innate immunity by promoting 'Lys-48'-dependent ubiquitination of TBK1. This chain is TRAF3-interacting JNK-activating modulator (TRAF3IP3), found in Homo sapiens (Human).